Reading from the N-terminus, the 229-residue chain is Flagellar L-ring protein (229 aa).

The signal sequence occupies residues 1 to 23 (MLSRLGARALVCLAGVAMLAASG). Cysteine 24 is lipidated: N-palmitoyl cysteine. The S-diacylglycerol cysteine moiety is linked to residue cysteine 24.

Belongs to the FlgH family. The basal body constitutes a major portion of the flagellar organelle and consists of four rings (L,P,S, and M) mounted on a central rod.

It is found in the cell outer membrane. The protein localises to the bacterial flagellum basal body. Its function is as follows. Assembles around the rod to form the L-ring and probably protects the motor/basal body from shearing forces during rotation. The chain is Flagellar L-ring protein from Cupriavidus taiwanensis (strain DSM 17343 / BCRC 17206 / CCUG 44338 / CIP 107171 / LMG 19424 / R1) (Ralstonia taiwanensis (strain LMG 19424)).